Reading from the N-terminus, the 599-residue chain is Elongation factor 4 (599 aa).

Positions 5-187 constitute a tr-type G domain; that stretch reads SKIRNFSIVA…AIVKRLPAPT (183 aa). Residues 17-22 and 134-137 contribute to the GTP site; these read DHGKST and NKID.

It belongs to the TRAFAC class translation factor GTPase superfamily. Classic translation factor GTPase family. LepA subfamily.

It is found in the cell inner membrane. The enzyme catalyses GTP + H2O = GDP + phosphate + H(+). Functionally, required for accurate and efficient protein synthesis under certain stress conditions. May act as a fidelity factor of the translation reaction, by catalyzing a one-codon backward translocation of tRNAs on improperly translocated ribosomes. Back-translocation proceeds from a post-translocation (POST) complex to a pre-translocation (PRE) complex, thus giving elongation factor G a second chance to translocate the tRNAs correctly. Binds to ribosomes in a GTP-dependent manner. The sequence is that of Elongation factor 4 from Ruegeria sp. (strain TM1040) (Silicibacter sp.).